Reading from the N-terminus, the 485-residue chain is Glutamyl-tRNA(Gln) amidotransferase subunit A (485 aa).

Active-site charge relay system residues include lysine 78 and serine 153. Catalysis depends on serine 177, which acts as the Acyl-ester intermediate.

Belongs to the amidase family. GatA subfamily. In terms of assembly, heterotrimer of A, B and C subunits.

It catalyses the reaction L-glutamyl-tRNA(Gln) + L-glutamine + ATP + H2O = L-glutaminyl-tRNA(Gln) + L-glutamate + ADP + phosphate + H(+). Functionally, allows the formation of correctly charged Gln-tRNA(Gln) through the transamidation of misacylated Glu-tRNA(Gln) in organisms which lack glutaminyl-tRNA synthetase. The reaction takes place in the presence of glutamine and ATP through an activated gamma-phospho-Glu-tRNA(Gln). This is Glutamyl-tRNA(Gln) amidotransferase subunit A from Bacillus cereus (strain G9842).